A 200-amino-acid chain; its full sequence is MEARELKANVRKESGKEQARRMRREGLIPAVLYGPGTDPVSLSVNASDLKTALKGAEENVLIKLIIDDSGRLMEKNSLIRELQIEPLTNNFFHADFYALRMDQESTFDVPIHFEGQPVGIEKGGELQYLKREIKVSCLPSELPDCITVDISRLDVGDAVLIGDLSLSESIRCFDSKDIVLVTIAALHGVNKAEETEEASS.

The tract at residues 1–20 (MEARELKANVRKESGKEQAR) is disordered.

The protein belongs to the bacterial ribosomal protein bL25 family. CTC subfamily. As to quaternary structure, part of the 50S ribosomal subunit; part of the 5S rRNA/L5/L18/L25 subcomplex. Contacts the 5S rRNA. Binds to the 5S rRNA independently of L5 and L18.

In terms of biological role, this is one of the proteins that binds to the 5S RNA in the ribosome where it forms part of the central protuberance. The sequence is that of Large ribosomal subunit protein bL25 from Syntrophus aciditrophicus (strain SB).